Here is a 209-residue protein sequence, read N- to C-terminus: Lectin (209 aa).

Homodimer; non-covalently linked.

Its function is as follows. Binds chito-oligosaccherides. Has hemagglutinating activity towards rabbit erythrocytes. In Luffa acutangula (Ridged gourd), this protein is Lectin.